A 268-amino-acid polypeptide reads, in one-letter code: Tryptophan synthase alpha chain (268 aa).

Residues Glu-47 and Asp-58 each act as proton acceptor in the active site.

It belongs to the TrpA family. As to quaternary structure, tetramer of two alpha and two beta chains.

The protein localises to the plastid. It localises to the chloroplast. It catalyses the reaction (1S,2R)-1-C-(indol-3-yl)glycerol 3-phosphate + L-serine = D-glyceraldehyde 3-phosphate + L-tryptophan + H2O. Its pathway is amino-acid biosynthesis; L-tryptophan biosynthesis; L-tryptophan from chorismate: step 5/5. In terms of biological role, the alpha subunit is responsible for the aldol cleavage of indoleglycerol phosphate to indole and glyceraldehyde 3-phosphate. This Gracilaria tenuistipitata var. liui (Red alga) protein is Tryptophan synthase alpha chain.